The primary structure comprises 89 residues: uncharacterized protein (89 aa).

Residues 67 to 86 (VYLSSMYICFILLAIWMTVW) traverse the membrane as a helical segment.

The protein localises to the membrane. This is an uncharacterized protein from Bacillus subtilis (strain 168).